The chain runs to 122 residues: Ubiquitin-related modifier 1 (122 aa).

The segment covering 33–48 (PSTVPADNNTSVTTKD) has biased composition (polar residues). The disordered stretch occupies residues 33 to 52 (PSTVPADNNTSVTTKDAASP). Gly-122 bears the 1-thioglycine mark. Gly-122 participates in a covalent cross-link: Glycyl lysine isopeptide (Gly-Lys) (interchain with K-? in acceptor proteins).

The protein belongs to the URM1 family. C-terminal thiocarboxylation occurs in 2 steps, it is first acyl-adenylated (-COAMP) via the hesA/moeB/thiF part of UBA4, then thiocarboxylated (-COSH) via the rhodanese domain of UBA4.

The protein localises to the cytoplasm. It functions in the pathway tRNA modification; 5-methoxycarbonylmethyl-2-thiouridine-tRNA biosynthesis. Acts as a sulfur carrier required for 2-thiolation of mcm(5)S(2)U at tRNA wobble positions of cytosolic tRNA(Lys), tRNA(Glu) and tRNA(Gln). Serves as sulfur donor in tRNA 2-thiolation reaction by being thiocarboxylated (-COSH) at its C-terminus by the MOCS3 homolog UBA4. The sulfur is then transferred to tRNA to form 2-thiolation of mcm(5)S(2)U. Prior mcm(5) tRNA modification by the elongator complex is required for 2-thiolation. Also acts as a ubiquitin-like protein (UBL) that is covalently conjugated via an isopeptide bond to lysine residues of target proteins such as AHP1. The thiocarboxylated form serves as substrate for conjugation and oxidative stress specifically induces the formation of UBL-protein conjugates. The polypeptide is Ubiquitin-related modifier 1 (Laccaria bicolor (strain S238N-H82 / ATCC MYA-4686) (Bicoloured deceiver)).